Reading from the N-terminus, the 609-residue chain is Glutamine--fructose-6-phosphate aminotransferase [isomerizing] (609 aa).

The active-site Nucleophile; for GATase activity is the Cys2. In terms of domain architecture, Glutamine amidotransferase type-2 spans 2–218 (CGIVGAIAQR…EGDIAEITRR (217 aa)). SIS domains are found at residues 286–426 (ADEL…LKGL) and 458–599 (LAED…VDQP). Catalysis depends on Lys604, which acts as the For Fru-6P isomerization activity.

As to quaternary structure, homodimer.

It is found in the cytoplasm. The enzyme catalyses D-fructose 6-phosphate + L-glutamine = D-glucosamine 6-phosphate + L-glutamate. In terms of biological role, catalyzes the first step in hexosamine metabolism, converting fructose-6P into glucosamine-6P using glutamine as a nitrogen source. In Salmonella paratyphi A (strain ATCC 9150 / SARB42), this protein is Glutamine--fructose-6-phosphate aminotransferase [isomerizing].